The following is a 1104-amino-acid chain: Translation initiation factor IF-2 (1104 aa).

Disordered regions lie at residues 51–444 (SLLG…LAAQ) and 461–497 (LARPAKPKSQQRTAPKPVAAMRKRKKETARQRQRRRA). Low complexity-rich tracts occupy residues 60-119 (AKPA…KPQA) and 127-164 (ATPKPVISKPAPALVKAAAAPARPTAAKPVPRPAAAKP). The segment covering 189-202 (APTPRPTPARPTPR) has biased composition (pro residues). 4 stretches are compositionally biased toward low complexity: residues 203-215 (PAGAGSPARPTPG), 227-246 (GAPSRPGAPTRAGAPAKPGA), 311-336 (STTGSGRPGAPTRPGAPGRPGMPAGM), and 366-396 (PTKAGAGAGTATPPVARPNSPSAPRRPSFRP). The span at 406–420 (GRPDWDDSARLDALR) shows a compositional bias: basic and acidic residues. The span at 481-495 (MRKRKKETARQRQRR) shows a compositional bias: basic residues. Positions 596–768 (RRPPVVTVMG…LLLVTEVEDL (173 aa)) constitute a tr-type G domain. Residues 605–612 (GHVDHGKT) form a G1 region. A GTP-binding site is contributed by 605-612 (GHVDHGKT). The G2 stretch occupies residues 630 to 634 (GITQH). The segment at 655–658 (DTPG) is G3. GTP is bound by residues 655–659 (DTPGH) and 709–712 (NKID). A G4 region spans residues 709-712 (NKID). The interval 745–747 (SAI) is G5.

Belongs to the TRAFAC class translation factor GTPase superfamily. Classic translation factor GTPase family. IF-2 subfamily.

It localises to the cytoplasm. In terms of biological role, one of the essential components for the initiation of protein synthesis. Protects formylmethionyl-tRNA from spontaneous hydrolysis and promotes its binding to the 30S ribosomal subunits. Also involved in the hydrolysis of GTP during the formation of the 70S ribosomal complex. This chain is Translation initiation factor IF-2, found in Synechococcus sp. (strain CC9605).